A 420-amino-acid polypeptide reads, in one-letter code: Trophoblast glycoprotein (420 aa).

The signal sequence occupies residues 1-34 (MPGGCSRGPAAGDGRLRLARLALVLLGWVSSSSS). Topologically, residues 35 to 355 (TSSASSSSSS…PILPPSLQTS (321 aa)) are extracellular. In terms of domain architecture, LRRNT spans 53–91 (SAQPPLPDQCPALCECSEAARTVKCVNRNLTEVPTDLPL). 2 disulfide bridges follow: C62–C68 and C66–C77. N-linked (GlcNAc...) asparagine glycosylation is present at N81. LRR repeat units follow at residues 92-113 (YVRN…AFAR), 116-139 (PLAE…GAFE), 141-163 (LPSL…FAFS), 172-204 (PSPL…AALV), 209-232 (LQGL…VLAQ), 233-255 (LPSL…VSFR), and 256-275 (NLTH…VLHN). N124 carries N-linked (GlcNAc...) asparagine glycosylation. Residue N275 is glycosylated (N-linked (GlcNAc...) asparagine). The LRRCT domain occupies 283–346 (GLPHVRVFLD…LNSADLDCDP (64 aa)). Disulfide bonds link C298–C323 and C300–C344. The helical transmembrane segment at 356–376 (YVFLGIVLALIGAIFLLVLYL) threads the bilayer. At 377–420 (NRKGIKKWMHNIRDACRDHMEGYHYRYEINADPRLTNLSSNSDV) the chain is on the cytoplasmic side. S418 is subject to Phosphoserine.

Highly glycosylated.

It is found in the cell membrane. May function as an inhibitor of Wnt/beta-catenin signaling by indirectly interacting with LRP6 and blocking Wnt3a-dependent LRP6 internalization. The chain is Trophoblast glycoprotein (TPBG) from Macaca fascicularis (Crab-eating macaque).